Consider the following 395-residue polypeptide: Elongation factor Tu (395 aa).

The tr-type G domain maps to 6 to 205 (KPHINVGTIG…NALEKISLPT (200 aa)). The segment at 15 to 22 (GHVDHGKT) is G1. Position 15–22 (15–22 (GHVDHGKT)) interacts with GTP. Thr22 is a Mg(2+) binding site. Residues 59–63 (GITIS) form a G2 region. Residues 80–83 (DCPG) are G3. Residues 80–84 (DCPGH) and 135–138 (NKCD) each bind GTP. Residues 135-138 (NKCD) are G4. The tract at residues 173-175 (SAV) is G5.

Belongs to the TRAFAC class translation factor GTPase superfamily. Classic translation factor GTPase family. EF-Tu/EF-1A subfamily. In terms of assembly, monomer.

The protein resides in the cytoplasm. It catalyses the reaction GTP + H2O = GDP + phosphate + H(+). In terms of biological role, GTP hydrolase that promotes the GTP-dependent binding of aminoacyl-tRNA to the A-site of ribosomes during protein biosynthesis. The sequence is that of Elongation factor Tu from Ehrlichia chaffeensis (strain ATCC CRL-10679 / Arkansas).